Reading from the N-terminus, the 154-residue chain is Fimbrial protein (154 aa).

A propeptide spans 1–6 (leader sequence); that stretch reads MNAQKG. Residue phenylalanine 7 is modified to N-methylphenylalanine. Residues 7 to 29 traverse the membrane as a helical segment; sequence FTLIELMIVIAIIGILAAIALPA.

It belongs to the N-Me-Phe pilin family. As to quaternary structure, the pili are polar flexible filaments of about 5.4 nanometers diameter and 2.5 micrometers average length; they consist of only a single polypeptide chain arranged in a helical configuration of five subunits per turn in the assembled pilus.

It localises to the fimbrium. The protein localises to the membrane. This chain is Fimbrial protein (tfpA), found in Moraxella nonliquefaciens.